A 52-amino-acid polypeptide reads, in one-letter code: uncharacterized protein (52 aa).

A helical transmembrane segment spans residues 21-40; it reads VAMNSYVELLFLSVPLIHIF.

The protein resides in the cell membrane. This is an uncharacterized protein from Bacillus subtilis (strain 168).